The following is a 227-amino-acid chain: Ribonuclease 3 (227 aa).

In terms of domain architecture, RNase III spans 4–133; sequence FETLEKLLGY…LIAAIYLDSN (130 aa). Glutamate 46 lines the Mg(2+) pocket. Aspartate 50 is an active-site residue. Asparagine 119 and glutamate 122 together coordinate Mg(2+). Glutamate 122 is a catalytic residue. The 69-residue stretch at 158-226 folds into the DRBM domain; it reads DPKTALQEWA…ARDLLHRLQD (69 aa).

It belongs to the ribonuclease III family. In terms of assembly, homodimer. It depends on Mg(2+) as a cofactor.

It is found in the cytoplasm. It catalyses the reaction Endonucleolytic cleavage to 5'-phosphomonoester.. Digests double-stranded RNA. Involved in the processing of primary rRNA transcript to yield the immediate precursors to the large and small rRNAs (23S and 16S). Processes some mRNAs, and tRNAs when they are encoded in the rRNA operon. Processes pre-crRNA and tracrRNA of type II CRISPR loci if present in the organism. This chain is Ribonuclease 3, found in Rickettsia akari (strain Hartford).